We begin with the raw amino-acid sequence, 471 residues long: Ribulose bisphosphate carboxylase large chain (471 aa).

Residues N115 and T165 each contribute to the substrate site. K167 (proton acceptor) is an active-site residue. K169 is a substrate binding site. Positions 193, 195, and 196 each coordinate Mg(2+). K193 is subject to N6-carboxylysine. H286 serves as the catalytic Proton acceptor. R287, H319, and S371 together coordinate substrate.

It belongs to the RuBisCO large chain family. Type I subfamily. Heterohexadecamer of 8 large chains and 8 small chains. The cofactor is Mg(2+).

It localises to the carboxysome. It carries out the reaction 2 (2R)-3-phosphoglycerate + 2 H(+) = D-ribulose 1,5-bisphosphate + CO2 + H2O. The enzyme catalyses D-ribulose 1,5-bisphosphate + O2 = 2-phosphoglycolate + (2R)-3-phosphoglycerate + 2 H(+). Its function is as follows. RuBisCO catalyzes two reactions: the carboxylation of D-ribulose 1,5-bisphosphate, the primary event in carbon dioxide fixation, as well as the oxidative fragmentation of the pentose substrate in the photorespiration process. Both reactions occur simultaneously and in competition at the same active site. This Synechococcus sp. (strain CC9605) protein is Ribulose bisphosphate carboxylase large chain.